The sequence spans 129 residues: Large ribosomal subunit protein mL53 (129 aa).

The N-terminal 50 residues, 1-50, are a transit peptide targeting the mitochondrion; the sequence is MREKLNLLAKLKSVVYKFDPLNPNTRSIRSFIPLTTCKRSRQLAPECSIS.

It belongs to the mitochondrion-specific ribosomal protein mL53 family.

It is found in the mitochondrion. This is Large ribosomal subunit protein mL53 (mrpl53) from Dictyostelium discoideum (Social amoeba).